Here is a 123-residue protein sequence, read N- to C-terminus: Large ribosomal subunit protein uL14c (123 aa).

Belongs to the universal ribosomal protein uL14 family. As to quaternary structure, part of the 50S ribosomal subunit.

Its subcellular location is the plastid. It localises to the chloroplast. Binds to 23S rRNA. This is Large ribosomal subunit protein uL14c from Lolium perenne (Perennial ryegrass).